The chain runs to 110 residues: PHD finger-like domain-containing protein 5B (110 aa).

The protein belongs to the PHF5 family.

This chain is PHD finger-like domain-containing protein 5B, found in Arabidopsis thaliana (Mouse-ear cress).